Reading from the N-terminus, the 409-residue chain is Galactosylgalactosylxylosylprotein 3-beta-glucuronosyltransferase S (409 aa).

The interval 1 to 45 (MSSARLLESQTSDEDNEDIERRPHQSHSRSCSNNTTPTHPPHPMV) is disordered. Topologically, residues 1–53 (MSSARLLESQTSDEDNEDIERRPHQSHSRSCSNNTTPTHPPHPMVRKGGVARR) are cytoplasmic. S9 is modified (phosphoserine). Residue T11 is modified to Phosphothreonine. 2 positions are modified to phosphoserine: S12 and S32. A helical; Signal-anchor for type II membrane protein membrane pass occupies residues 54–73 (ICLIGGALFLLLVALCYLTL). Residues 74 to 409 (SGDTRLGGSE…RENPHSKILS (336 aa)) lie on the Lumenal side of the membrane. 2 N-linked (GlcNAc...) asparagine glycosylation sites follow: N102 and N223. A Mn(2+)-binding site is contributed by D235. E318 (proton acceptor) is an active-site residue. N338 is a glycosylation site (N-linked (GlcNAc...) asparagine). Positions 389–409 (EGRNALISKNGRENPHSKILS) are disordered. Residues 398 to 409 (NGRENPHSKILS) are compositionally biased toward basic and acidic residues.

This sequence belongs to the glycosyltransferase 43 family. Mn(2+) serves as cofactor.

The protein resides in the golgi apparatus membrane. It catalyses the reaction 3-O-(beta-D-galactosyl-(1-&gt;3)-beta-D-galactosyl-(1-&gt;4)-beta-D-xylosyl)-L-seryl-[protein] + UDP-alpha-D-glucuronate = 3-O-(beta-D-GlcA-(1-&gt;3)-beta-D-Gal-(1-&gt;3)-beta-D-Gal-(1-&gt;4)-beta-D-Xyl)-L-seryl-[protein] + UDP + H(+). It functions in the pathway protein modification; protein glycosylation. Involved in the biosynthesis of L2/HNK-1 carbohydrate epitope on both glycolipids and glycoproteins. Enzyme has a broad specificity. This is Galactosylgalactosylxylosylprotein 3-beta-glucuronosyltransferase S (GlcAT-S) from Drosophila melanogaster (Fruit fly).